The sequence spans 72 residues: Translation initiation factor IF-1 (72 aa).

The 71-residue stretch at 2 to 72 (AKEDVIEIQG…TKGRITYRFK (71 aa)) folds into the S1-like domain.

Belongs to the IF-1 family. Component of the 30S ribosomal translation pre-initiation complex which assembles on the 30S ribosome in the order IF-2 and IF-3, IF-1 and N-formylmethionyl-tRNA(fMet); mRNA recruitment can occur at any time during PIC assembly.

Its subcellular location is the cytoplasm. In terms of biological role, one of the essential components for the initiation of protein synthesis. Stabilizes the binding of IF-2 and IF-3 on the 30S subunit to which N-formylmethionyl-tRNA(fMet) subsequently binds. Helps modulate mRNA selection, yielding the 30S pre-initiation complex (PIC). Upon addition of the 50S ribosomal subunit IF-1, IF-2 and IF-3 are released leaving the mature 70S translation initiation complex. The polypeptide is Translation initiation factor IF-1 (Lactiplantibacillus plantarum (strain ATCC BAA-793 / NCIMB 8826 / WCFS1) (Lactobacillus plantarum)).